Reading from the N-terminus, the 382-residue chain is Gas vesicle protein C1 (382 aa).

Residues 1–18 show a composition bias toward basic and acidic residues; that stretch reads MSVTDKRDEMSTARDKFA. Residues 1–21 are disordered; it reads MSVTDKRDEMSTARDKFAESQ. 7 repeat units span residues 22 to 60, 61 to 92, 93 to 130, 131 to 168, 169 to 200, 201 to 240, and 241 to 284. Positions 22 to 284 are 7 X approximate tandem repeats; the sequence is QEFESYADEF…VEAEAEVSPD (263 aa). The segment covering 260-302 has biased composition (acidic residues); it reads GAAEAEAEPVEADADVEAEAEVSPDEAGGESAGTEEEETEPAE. Residues 260-382 are disordered; the sequence is GAAEAEAEPV…DVPLRPDDKT (123 aa). Low complexity predominate over residues 303 to 316; that stretch reads VETAAPEVEGSPAD. Acidic residues predominate over residues 317–336; the sequence is TADEAEDTEAEEETEEEAPE. The span at 365 to 382 shows a compositional bias: basic and acidic residues; it reads EYRDEYGEDVPLRPDDKT.

This sequence belongs to the halobacterial gas vesicle GvpC family. Forms homodimers, interacts with GvpF1, GvpH1, GvpI1, GvpL1, GvpN1 and GvpO1 via its C-terminus (residues 329-382).

Its subcellular location is the gas vesicle. It is found in the cytoplasm. In terms of biological role, confers stability, involved in shaping gas vesicles. Gas vesicles are hollow, gas filled proteinaceous nanostructures found in several microbial planktonic microorganisms. They allow positioning of halobacteria at the optimal depth for growth in the poorly aerated, shallow brine pools of their habitat. Its function is as follows. Expression of a 9.5 kb p-vac DNA fragment containing 2 divergently transcribed regions (gvpD-gvpE-gvpF-gvpG-gvpH-gvpI-gvpJ-gvpK-gvpL-gvpM and gvpA-gvpC-gvpN-gvpO) allows H.volcanii to produce gas vesicles. A similar region restores gas vesicle production in H.halobium without the p-vac locus, but it still has the c-vac locus. The protein is Gas vesicle protein C1 (gvpC1) of Halobacterium salinarum (strain ATCC 700922 / JCM 11081 / NRC-1) (Halobacterium halobium).